Consider the following 504-residue polypeptide: Glycerol kinase (504 aa).

Thr-12 lines the ADP pocket. Thr-12, Thr-13, and Ser-14 together coordinate ATP. Residue Thr-12 coordinates sn-glycerol 3-phosphate. An ADP-binding site is contributed by Arg-16. The sn-glycerol 3-phosphate site is built by Arg-82, Glu-83, Tyr-134, and Asp-246. Arg-82, Glu-83, Tyr-134, Asp-246, and Gln-247 together coordinate glycerol. Residues Thr-268 and Gly-312 each coordinate ADP. ATP-binding residues include Thr-268, Gly-312, Gln-316, and Gly-413. ADP is bound by residues Gly-413 and Asn-417.

It belongs to the FGGY kinase family.

The catalysed reaction is glycerol + ATP = sn-glycerol 3-phosphate + ADP + H(+). It functions in the pathway polyol metabolism; glycerol degradation via glycerol kinase pathway; sn-glycerol 3-phosphate from glycerol: step 1/1. With respect to regulation, inhibited by fructose 1,6-bisphosphate (FBP). Functionally, key enzyme in the regulation of glycerol uptake and metabolism. Catalyzes the phosphorylation of glycerol to yield sn-glycerol 3-phosphate. This Paenarthrobacter aurescens (strain TC1) protein is Glycerol kinase.